Here is a 203-residue protein sequence, read N- to C-terminus: Large ribosomal subunit protein eL15 (203 aa).

Residues 166–203 (ATGKKSRGINKGHRYNNTRSGRRHTWKRQNTQSYWRYR) form a disordered region. Residues 169 to 192 (KKSRGINKGHRYNNTRSGRRHTWK) are compositionally biased toward basic residues. Over residues 193–203 (RQNTQSYWRYR) the composition is skewed to polar residues.

This sequence belongs to the eukaryotic ribosomal protein eL15 family.

In Aspergillus niger, this protein is Large ribosomal subunit protein eL15 (rpl15).